A 218-amino-acid polypeptide reads, in one-letter code: tRNA (guanine-N(7)-)-methyltransferase (218 aa).

Residues E45, E70, D97, and D119 each contribute to the S-adenosyl-L-methionine site. Residue D119 is part of the active site. Position 123 (K123) interacts with substrate. The segment at 125–130 (RHEKRR) is interaction with RNA. Residues D155 and 195-198 (TEYE) each bind substrate.

The protein belongs to the class I-like SAM-binding methyltransferase superfamily. TrmB family.

It catalyses the reaction guanosine(46) in tRNA + S-adenosyl-L-methionine = N(7)-methylguanosine(46) in tRNA + S-adenosyl-L-homocysteine. The protein operates within tRNA modification; N(7)-methylguanine-tRNA biosynthesis. Functionally, catalyzes the formation of N(7)-methylguanine at position 46 (m7G46) in tRNA. The chain is tRNA (guanine-N(7)-)-methyltransferase from Lactobacillus acidophilus (strain ATCC 700396 / NCK56 / N2 / NCFM).